The chain runs to 277 residues: Protein HEAT-INDUCED TAS1 TARGET 1 (277 aa).

This sequence belongs to the heat induced plant HTT protein family. As to quaternary structure, interacts with the heat shock proteins HSP70-14 and At2g33735/HSP40, and with NFYC2 in both cytoplasm and nucleus. In terms of tissue distribution, expressed ubiquitously, including in seedlings, leaves, stems, inflorescences and siliques.

It localises to the cytoplasm. It is found in the nucleus. Functionally, mediates both basal and acquired thermotolerance via HSFA1s-directed pathways (e.g. HSFA1A, HSFA1B, and HSFA1D). Triggers the expression of HSFA1A and HSFA1B. The sequence is that of Protein HEAT-INDUCED TAS1 TARGET 1 from Arabidopsis thaliana (Mouse-ear cress).